A 295-amino-acid chain; its full sequence is NAD kinase (295 aa).

Asp-74 (proton acceptor) is an active-site residue. NAD(+) contacts are provided by residues 74 to 75 (DG), 148 to 149 (ND), His-159, Arg-176, Asp-178, and 189 to 194 (TAYALS).

Belongs to the NAD kinase family. A divalent metal cation is required as a cofactor.

It localises to the cytoplasm. The enzyme catalyses NAD(+) + ATP = ADP + NADP(+) + H(+). In terms of biological role, involved in the regulation of the intracellular balance of NAD and NADP, and is a key enzyme in the biosynthesis of NADP. Catalyzes specifically the phosphorylation on 2'-hydroxyl of the adenosine moiety of NAD to yield NADP. The protein is NAD kinase of Legionella pneumophila (strain Paris).